The sequence spans 929 residues: Bifunctional uridylyltransferase/uridylyl-removing enzyme (929 aa).

Residues 1 to 383 (MDSVTTEHKQ…RPTPAKRRVP (383 aa)) form a uridylyltransferase region. The segment at 384 to 739 (DSDDFIVDNN…VGFDEVRGVT (356 aa)) is uridylyl-removing. Residues 499–622 (VDEHLIRCVG…VQSVEQMKLL (124 aa)) enclose the HD domain. ACT domains lie at 740-822 (ELTI…VVAR) and 850-927 (VIEV…AVQP).

It belongs to the GlnD family. The cofactor is Mg(2+).

The catalysed reaction is [protein-PII]-L-tyrosine + UTP = [protein-PII]-uridylyl-L-tyrosine + diphosphate. It carries out the reaction [protein-PII]-uridylyl-L-tyrosine + H2O = [protein-PII]-L-tyrosine + UMP + H(+). Its activity is regulated as follows. Uridylyltransferase (UTase) activity is inhibited by glutamine, while glutamine activates uridylyl-removing (UR) activity. In terms of biological role, modifies, by uridylylation and deuridylylation, the PII regulatory proteins (GlnB and homologs), in response to the nitrogen status of the cell that GlnD senses through the glutamine level. Under low glutamine levels, catalyzes the conversion of the PII proteins and UTP to PII-UMP and PPi, while under higher glutamine levels, GlnD hydrolyzes PII-UMP to PII and UMP (deuridylylation). Thus, controls uridylylation state and activity of the PII proteins, and plays an important role in the regulation of nitrogen fixation and metabolism. This is Bifunctional uridylyltransferase/uridylyl-removing enzyme from Bradyrhizobium diazoefficiens (strain JCM 10833 / BCRC 13528 / IAM 13628 / NBRC 14792 / USDA 110).